Here is a 206-residue protein sequence, read N- to C-terminus: Ribonuclease HII (206 aa).

In terms of domain architecture, RNase H type-2 spans 14–206 (EFICGIDEVG…FKLRQLGEKV (193 aa)). The a divalent metal cation site is built by D20, E21, and D117.

Belongs to the RNase HII family. It depends on Mn(2+) as a cofactor. The cofactor is Mg(2+).

The protein resides in the cytoplasm. The enzyme catalyses Endonucleolytic cleavage to 5'-phosphomonoester.. Functionally, endonuclease that specifically degrades the RNA of RNA-DNA hybrids. This is Ribonuclease HII from Chlorobium chlorochromatii (strain CaD3).